Reading from the N-terminus, the 509-residue chain is Histidine--tRNA ligase (509 aa).

This sequence belongs to the class-II aminoacyl-tRNA synthetase family. Homodimer.

It localises to the cytoplasm. It catalyses the reaction tRNA(His) + L-histidine + ATP = L-histidyl-tRNA(His) + AMP + diphosphate + H(+). The sequence is that of Histidine--tRNA ligase from Rhodopseudomonas palustris (strain TIE-1).